The chain runs to 309 residues: Glutaminase (309 aa).

Residues Ser65, Asn117, Glu162, Asn169, Tyr193, Tyr245, and Val263 each contribute to the substrate site.

This sequence belongs to the glutaminase family. Homotetramer.

The catalysed reaction is L-glutamine + H2O = L-glutamate + NH4(+). The sequence is that of Glutaminase from Clostridioides difficile (strain 630) (Peptoclostridium difficile).